The sequence spans 78 residues: Large ribosomal subunit protein bL28 (78 aa).

The disordered stretch occupies residues methionine 1–alanine 21.

The protein belongs to the bacterial ribosomal protein bL28 family.

The protein is Large ribosomal subunit protein bL28 of Cellvibrio japonicus (strain Ueda107) (Pseudomonas fluorescens subsp. cellulosa).